A 449-amino-acid chain; its full sequence is Tubulin alpha-8 chain (449 aa).

The short motif at 1–4 is the MREC motif element; it reads MREC. The GTP site is built by Gln11, Glu71, Ser140, Gly144, Thr145, Thr179, Asn206, and Asn228. Glu71 contacts Mg(2+). Glu254 is an active-site residue.

It belongs to the tubulin family. Dimer of alpha and beta chains. A typical microtubule is a hollow water-filled tube with an outer diameter of 25 nm and an inner diameter of 15 nM. Alpha-beta heterodimers associate head-to-tail to form protofilaments running lengthwise along the microtubule wall with the beta-tubulin subunit facing the microtubule plus end conferring a structural polarity. Microtubules usually have 13 protofilaments but different protofilament numbers can be found in some organisms and specialized cells. Mg(2+) serves as cofactor. Post-translationally, some glutamate residues at the C-terminus are polyglycylated, resulting in polyglycine chains on the gamma-carboxyl group. Glycylation is mainly limited to tubulin incorporated into axonemes (cilia and flagella) whereas glutamylation is prevalent in neuronal cells, centrioles, axonemes, and the mitotic spindle. Both modifications can coexist on the same protein on adjacent residues, and lowering polyglycylation levels increases polyglutamylation, and reciprocally. Cilia and flagella glycylation is required for their stability and maintenance. Flagella glycylation controls sperm motility. Some glutamate residues at the C-terminus are polyglutamylated, resulting in polyglutamate chains on the gamma-carboxyl group. Polyglutamylation plays a key role in microtubule severing by spastin (SPAST). SPAST preferentially recognizes and acts on microtubules decorated with short polyglutamate tails: severing activity by SPAST increases as the number of glutamates per tubulin rises from one to eight, but decreases beyond this glutamylation threshold. Glutamylation is also involved in cilia motility. In terms of processing, the C-terminal phenylalanine residue is cleaved by MATCAP1/KIAA0895L.

It localises to the cytoplasm. The protein localises to the cytoskeleton. The enzyme catalyses GTP + H2O = GDP + phosphate + H(+). Functionally, tubulin is the major constituent of microtubules, a cylinder consisting of laterally associated linear protofilaments composed of alpha- and beta-tubulin heterodimers. Microtubules grow by the addition of GTP-tubulin dimers to the microtubule end, where a stabilizing cap forms. Below the cap, tubulin dimers are in GDP-bound state, owing to GTPase activity of alpha-tubulin. This Bos taurus (Bovine) protein is Tubulin alpha-8 chain (TUBA8).